We begin with the raw amino-acid sequence, 338 residues long: 1-aminocyclopropane-1-carboxylate deaminase (338 aa).

Lys-51 bears the N6-(pyridoxal phosphate)lysine mark. Catalysis depends on Ser-78, which acts as the Nucleophile.

It belongs to the ACC deaminase/D-cysteine desulfhydrase family. Homotrimer. It depends on pyridoxal 5'-phosphate as a cofactor.

It carries out the reaction 1-aminocyclopropane-1-carboxylate + H2O = 2-oxobutanoate + NH4(+). Functionally, catalyzes a cyclopropane ring-opening reaction, the irreversible conversion of 1-aminocyclopropane-1-carboxylate (ACC) to ammonia and alpha-ketobutyrate. Allows growth on ACC as a nitrogen source. In Burkholderia lata (strain ATCC 17760 / DSM 23089 / LMG 22485 / NCIMB 9086 / R18194 / 383), this protein is 1-aminocyclopropane-1-carboxylate deaminase.